A 220-amino-acid chain; its full sequence is Guanylate kinase (220 aa).

A Guanylate kinase-like domain is found at 14–194 (GLMVVISSPS…SYAAIKSIIN (181 aa)). ATP is bound at residue 21-28 (SPSGAGKS).

The protein belongs to the guanylate kinase family.

It localises to the cytoplasm. It catalyses the reaction GMP + ATP = GDP + ADP. In terms of biological role, essential for recycling GMP and indirectly, cGMP. This chain is Guanylate kinase, found in Brucella abortus (strain 2308).